The primary structure comprises 371 residues: Enoyl-[acyl-carrier-protein] reductase [NADH] 2, chloroplastic (371 aa).

Residues 1–67 (MGASVTTGLQ…SLNHKRFAVR (67 aa)) constitute a chloroplast transit peptide. NAD(+)-binding positions include G87, Y94, 151–152 (DA), 198–199 (SL), and L248. Residues Y250 and Y260 each act as proton acceptor in the active site. NAD(+) contacts are provided by residues K268 and 298–302 (LGSRA).

The protein belongs to the short-chain dehydrogenases/reductases (SDR) family. FabI subfamily. In terms of assembly, homotetramer.

Its subcellular location is the plastid. It is found in the chloroplast. It catalyses the reaction a 2,3-saturated acyl-[ACP] + NAD(+) = a (2E)-enoyl-[ACP] + NADH + H(+). Its pathway is lipid metabolism; fatty acid biosynthesis. Its function is as follows. Catalyzes the NAD-dependent reduction of a carbon-carbon double bond in an enoyl moiety that is covalently linked to an acyl carrier protein (ACP). Catalyzes the last reduction step in the de novo synthesis cycle of fatty acids. Involved in the elongation cycle of fatty acids which are used in lipid metabolism. Required for normal plant growth. This is Enoyl-[acyl-carrier-protein] reductase [NADH] 2, chloroplastic from Oryza sativa subsp. japonica (Rice).